A 186-amino-acid chain; its full sequence is Ribosome-recycling factor (186 aa).

Belongs to the RRF family.

The protein localises to the cytoplasm. Functionally, responsible for the release of ribosomes from messenger RNA at the termination of protein biosynthesis. May increase the efficiency of translation by recycling ribosomes from one round of translation to another. The protein is Ribosome-recycling factor of Wolinella succinogenes (strain ATCC 29543 / DSM 1740 / CCUG 13145 / JCM 31913 / LMG 7466 / NCTC 11488 / FDC 602W) (Vibrio succinogenes).